The primary structure comprises 449 residues: Aspartate aminotransferase 3, chloroplastic (449 aa).

The N-terminal 43 residues, 1–43 (MKTTHFSSSSSSDRRIGALLRHLNSGSDSDNLSSLYASPTSGG), are a transit peptide targeting the chloroplast. The L-aspartate site is built by Gly-81, Trp-178, and Asn-231. Residue Lys-295 is modified to N6-(pyridoxal phosphate)lysine. Arg-423 lines the L-aspartate pocket.

It belongs to the class-I pyridoxal-phosphate-dependent aminotransferase family. In terms of assembly, homodimer. Requires pyridoxal 5'-phosphate as cofactor. In terms of tissue distribution, expressed in roots, cauline leaves, flowers, hypocotyl epidermis and root hair cells.

The protein resides in the plastid. It localises to the chloroplast. The catalysed reaction is L-aspartate + 2-oxoglutarate = oxaloacetate + L-glutamate. In terms of biological role, amino acid aminotransferase important for the metabolism of amino acids and Krebs-cycle related organic acids. No activity with D-Asp or D-Ala as amino donors. In plants, it is involved in nitrogen metabolism and in aspects of carbon and energy metabolism. This chain is Aspartate aminotransferase 3, chloroplastic (ASP3), found in Arabidopsis thaliana (Mouse-ear cress).